The chain runs to 815 residues: Kinesin heavy chain (815 aa).

The Kinesin motor domain occupies 11-329 (GVQVFCRIRP…LLFGARAKTI (319 aa)). Residue 88-95 (GQTSSGKT) participates in ATP binding. Coiled-coil stretches lie at residues 335-374 (INEE…RWRA), 422-554 (PITD…LDEC), and 695-785 (PAQK…RMNA). Residues 788 to 815 (IVKPIRPGQVYTSPSAGMSQGAPNGSNA) form a disordered region. Over residues 797-815 (VYTSPSAGMSQGAPNGSNA) the composition is skewed to polar residues.

This sequence belongs to the TRAFAC class myosin-kinesin ATPase superfamily. Kinesin family. Kinesin subfamily. In terms of assembly, oligomer composed of two heavy chains and two light chains.

It localises to the cytoplasm. The protein resides in the cytoskeleton. Functionally, microtubule-dependent motor protein required for organelle transport. Plays a role in endosome transport. Required for the transport of mitochondria along the axon of motor neurons. Involved in the nuclear migration of hyp7 hypodermal precursor cells. Required for the formation of dendritic branches of PVD sensory neurons. In non-ciliated neurons such as the PVD and PHC neurons, required for the organization of minus-end out microtubules in dendrites. Also required for the minus-end out orientation of microtubules in dendrites of AQR gas-sensing neurons. Involved in the localization of unc-33 to neurites. Positively regulates cilium position and dendrite morphogenesis in the postembryonic AQR and PQR gas-sensing neurons. Plays a more prominent role in regulating dendrite morphogenesis in AQR than in PQR neurons. Plays a role in regulating the localization of grdn-1 to the distal dendrites of AQR sensory neurons. The sequence is that of Kinesin heavy chain from Caenorhabditis elegans.